A 1015-amino-acid chain; its full sequence is Probable beta-galactosidase B (1015 aa).

Positions 1–20 (MAHIYRLLLLLLSNLWFSTA) are cleaved as a signal peptide. A glycan (N-linked (GlcNAc...) asparagine) is linked at asparagine 23. Residue tyrosine 90 coordinates substrate. N-linked (GlcNAc...) asparagine glycosylation is found at asparagine 99 and asparagine 100. Substrate is bound by residues asparagine 135, alanine 136, and glutamate 137. An N-linked (GlcNAc...) asparagine glycan is attached at asparagine 172. Asparagine 195 is a substrate binding site. Glutamate 196 (proton donor) is an active-site residue. N-linked (GlcNAc...) asparagine glycosylation is present at asparagine 211. Position 265 (tyrosine 265) interacts with substrate. Cysteines 271 and 324 form a disulfide. Glutamate 308 functions as the Nucleophile in the catalytic mechanism. Tyrosine 373 serves as a coordination point for substrate. 7 N-linked (GlcNAc...) asparagine glycosylation sites follow: asparagine 411, asparagine 456, asparagine 554, asparagine 679, asparagine 735, asparagine 775, and asparagine 821.

This sequence belongs to the glycosyl hydrolase 35 family.

The protein localises to the secreted. It carries out the reaction Hydrolysis of terminal non-reducing beta-D-galactose residues in beta-D-galactosides.. Its function is as follows. Cleaves beta-linked terminal galactosyl residues from gangliosides, glycoproteins, and glycosaminoglycans. The polypeptide is Probable beta-galactosidase B (lacB) (Aspergillus fumigatus (strain CBS 144.89 / FGSC A1163 / CEA10) (Neosartorya fumigata)).